Reading from the N-terminus, the 325-residue chain is All-trans-nonaprenyl-diphosphate synthase (geranyl-diphosphate specific) (325 aa).

Residues Lys-48, Arg-51, and His-81 each coordinate isopentenyl diphosphate. Mg(2+) contacts are provided by Asp-88 and Asp-92. Arg-97 is a binding site for an all-trans-polyprenyl diphosphate. Arg-98 lines the isopentenyl diphosphate pocket. 4 residues coordinate an all-trans-polyprenyl diphosphate: Lys-174, Thr-175, Gln-211, and Lys-228.

It belongs to the FPP/GGPP synthase family. Homodimer. Mg(2+) is required as a cofactor.

The enzyme catalyses 7 isopentenyl diphosphate + (2E)-geranyl diphosphate = all-trans-nonaprenyl diphosphate + 7 diphosphate. In terms of biological role, catalyzes the sequential condensation of isopentenyl diphosphate (IPP) with the allylic substrate to give solanesyl diphosphate. Could be important to determine the side chain length of ubiquinone. The protein is All-trans-nonaprenyl-diphosphate synthase (geranyl-diphosphate specific) (sdsA) of Rhodobacter capsulatus (Rhodopseudomonas capsulata).